The chain runs to 234 residues: BTB/POZ domain-containing protein KCTD5 (234 aa).

An N-acetylalanine modification is found at Ala2. The region spanning Lys44 to Asp146 is the BTB domain. The interval Asn211 to Met234 is disordered. A compositionally biased stretch (basic and acidic residues) spans Pro220–Met234.

In terms of assembly, homopentamer. Interacts (via C-terminus) with GRASP55/GORASP2. Interacts with CUL3 and with ubiquitinated proteins. Interacts with CRY1.

It localises to the cytoplasm. Its subcellular location is the cytosol. The protein localises to the nucleus. Its function is as follows. Its interaction with CUL3 suggests that it may act as a substrate adapter in some E3 ligase complex. Does not affect the function of Kv channel Kv2.1/KCNB1, Kv1.2/KCNA2, Kv4.2/KCND2 and Kv3.4/KCNC4. This Bos taurus (Bovine) protein is BTB/POZ domain-containing protein KCTD5 (KCTD5).